Consider the following 154-residue polypeptide: SsrA-binding protein (154 aa).

The segment at Asp-134–Asn-154 is disordered.

It belongs to the SmpB family.

Its subcellular location is the cytoplasm. Functionally, required for rescue of stalled ribosomes mediated by trans-translation. Binds to transfer-messenger RNA (tmRNA), required for stable association of tmRNA with ribosomes. tmRNA and SmpB together mimic tRNA shape, replacing the anticodon stem-loop with SmpB. tmRNA is encoded by the ssrA gene; the 2 termini fold to resemble tRNA(Ala) and it encodes a 'tag peptide', a short internal open reading frame. During trans-translation Ala-aminoacylated tmRNA acts like a tRNA, entering the A-site of stalled ribosomes, displacing the stalled mRNA. The ribosome then switches to translate the ORF on the tmRNA; the nascent peptide is terminated with the 'tag peptide' encoded by the tmRNA and targeted for degradation. The ribosome is freed to recommence translation, which seems to be the essential function of trans-translation. In Leuconostoc mesenteroides subsp. mesenteroides (strain ATCC 8293 / DSM 20343 / BCRC 11652 / CCM 1803 / JCM 6124 / NCDO 523 / NBRC 100496 / NCIMB 8023 / NCTC 12954 / NRRL B-1118 / 37Y), this protein is SsrA-binding protein.